The following is a 603-amino-acid chain: Elongation factor 4 (603 aa).

Residues 7–191 enclose the tr-type G domain; that stretch reads SNIRNFSIVA…AIVTRLPPPK (185 aa). GTP is bound by residues 19-24 and 138-141; these read DHGKST and NKVD.

It belongs to the TRAFAC class translation factor GTPase superfamily. Classic translation factor GTPase family. LepA subfamily.

It is found in the cell inner membrane. The catalysed reaction is GTP + H2O = GDP + phosphate + H(+). Its function is as follows. Required for accurate and efficient protein synthesis under certain stress conditions. May act as a fidelity factor of the translation reaction, by catalyzing a one-codon backward translocation of tRNAs on improperly translocated ribosomes. Back-translocation proceeds from a post-translocation (POST) complex to a pre-translocation (PRE) complex, thus giving elongation factor G a second chance to translocate the tRNAs correctly. Binds to ribosomes in a GTP-dependent manner. This is Elongation factor 4 from Bradyrhizobium diazoefficiens (strain JCM 10833 / BCRC 13528 / IAM 13628 / NBRC 14792 / USDA 110).